A 311-amino-acid chain; its full sequence is S-adenosyl-L-methionine-dependent tRNA 4-demethylwyosine synthase (311 aa).

6 residues coordinate [4Fe-4S] cluster: C26, C39, C52, C62, C66, and C69. Positions 45–283 (YGIETHRCIQ…LKLAKMLDEN (239 aa)) constitute a Radical SAM core domain.

It belongs to the TYW1 family. As to quaternary structure, monomer. Requires [4Fe-4S] cluster as cofactor.

It localises to the cytoplasm. The catalysed reaction is N(1)-methylguanosine(37) in tRNA(Phe) + pyruvate + S-adenosyl-L-methionine = 4-demethylwyosine(37) in tRNA(Phe) + 5'-deoxyadenosine + L-methionine + CO2 + H2O. Its function is as follows. Component of the wyosine derivatives biosynthesis pathway that catalyzes the condensation of N-methylguanine with 2 carbon atoms from pyruvate to form the tricyclic 4-demethylwyosine (imG-14) on guanosine-37 of tRNA(Phe). This Methanocaldococcus jannaschii (strain ATCC 43067 / DSM 2661 / JAL-1 / JCM 10045 / NBRC 100440) (Methanococcus jannaschii) protein is S-adenosyl-L-methionine-dependent tRNA 4-demethylwyosine synthase.